The following is a 157-amino-acid chain: 3-dehydroquinate dehydratase (157 aa).

Tyr22 (proton acceptor) is an active-site residue. The substrate site is built by Asn73, His79, and Asp86. The Proton donor role is filled by His99. Residues 100–101 and Arg110 each bind substrate; that span reads LS.

Belongs to the type-II 3-dehydroquinase family. As to quaternary structure, homododecamer.

The enzyme catalyses 3-dehydroquinate = 3-dehydroshikimate + H2O. Its pathway is metabolic intermediate biosynthesis; chorismate biosynthesis; chorismate from D-erythrose 4-phosphate and phosphoenolpyruvate: step 3/7. Its function is as follows. Catalyzes a trans-dehydration via an enolate intermediate. The polypeptide is 3-dehydroquinate dehydratase (Roseiflexus castenholzii (strain DSM 13941 / HLO8)).